We begin with the raw amino-acid sequence, 185 residues long: Elongation factor P (185 aa).

It belongs to the elongation factor P family.

The protein localises to the cytoplasm. It participates in protein biosynthesis; polypeptide chain elongation. In terms of biological role, involved in peptide bond synthesis. Stimulates efficient translation and peptide-bond synthesis on native or reconstituted 70S ribosomes in vitro. Probably functions indirectly by altering the affinity of the ribosome for aminoacyl-tRNA, thus increasing their reactivity as acceptors for peptidyl transferase. The sequence is that of Elongation factor P from Limosilactobacillus fermentum (strain NBRC 3956 / LMG 18251) (Lactobacillus fermentum).